The chain runs to 251 residues: Hydroxyacylglutathione hydrolase (251 aa).

7 residues coordinate Zn(2+): His-53, His-55, Asp-57, His-58, His-110, Asp-127, and His-165.

The protein belongs to the metallo-beta-lactamase superfamily. Glyoxalase II family. As to quaternary structure, monomer. It depends on Zn(2+) as a cofactor.

The catalysed reaction is an S-(2-hydroxyacyl)glutathione + H2O = a 2-hydroxy carboxylate + glutathione + H(+). It participates in secondary metabolite metabolism; methylglyoxal degradation; (R)-lactate from methylglyoxal: step 2/2. Its function is as follows. Thiolesterase that catalyzes the hydrolysis of S-D-lactoyl-glutathione to form glutathione and D-lactic acid. The protein is Hydroxyacylglutathione hydrolase of Escherichia coli (strain 55989 / EAEC).